Consider the following 115-residue polypeptide: Ribosome-binding factor A (115 aa).

The protein belongs to the RbfA family. As to quaternary structure, monomer. Binds 30S ribosomal subunits, but not 50S ribosomal subunits or 70S ribosomes.

It localises to the cytoplasm. Its function is as follows. One of several proteins that assist in the late maturation steps of the functional core of the 30S ribosomal subunit. Associates with free 30S ribosomal subunits (but not with 30S subunits that are part of 70S ribosomes or polysomes). Required for efficient processing of 16S rRNA. May interact with the 5'-terminal helix region of 16S rRNA. This chain is Ribosome-binding factor A, found in Staphylococcus carnosus (strain TM300).